Here is a 163-residue protein sequence, read N- to C-terminus: Adenosine 5'-monophosphoramidase HINT2 (163 aa).

Residues Met-1–Thr-17 constitute a mitochondrion transit peptide. Lys-45 bears the N6-succinyllysine mark. The HIT domain maps to Ile-55–Gly-163. AMP-binding residues include Ser-63 and Asp-80. Lys-119 bears the N6-acetyllysine mark. The residue at position 128 (Lys-128) is an N6-acetyllysine; alternate. Lys-128 is modified (N6-succinyllysine; alternate). Asn-136 contributes to the AMP binding site. An N6-acetyllysine modification is found at Lys-139. AMP-binding positions include Ala-142–Val-145 and His-149–His-151. A Histidine triad motif motif is present at residues His-147–His-151. Residue His-149 is the Tele-AMP-histidine intermediate of the active site.

This sequence belongs to the HINT family.

It is found in the mitochondrion. The enzyme catalyses adenosine 5'-phosphoramidate + H2O = AMP + NH4(+). Its function is as follows. Exhibits adenosine 5'-monophosphoramidase activity, hydrolyzing purine nucleotide phosphoramidates with a single phosphate group such as adenosine 5'monophosphoramidate (AMP-NH2) to yield AMP and NH2. Hydrolyzes adenosine 5'-O-p-nitrophenylphosphoramidate (AMP-pNA). May be involved in steroid biosynthesis. May play a role in apoptosis. The sequence is that of Adenosine 5'-monophosphoramidase HINT2 from Mus musculus (Mouse).